A 692-amino-acid chain; its full sequence is uncharacterized protein (692 aa).

Residues 1–39 (MLRLPSSMPIVSFPANPNLLINPQPSWPSRRGNSAVVVS) constitute a chloroplast transit peptide. Positions 189–523 (EISPEPVAAA…RLESLLSESL (335 aa)) constitute a Protein kinase domain. Residues 195–203 (VAAASLGQV) and Lys218 each bind ATP. Asp343 serves as the catalytic Proton acceptor.

The protein belongs to the protein kinase superfamily. ADCK protein kinase family.

Its subcellular location is the plastid. The protein resides in the chloroplast. It localises to the plastoglobule. This is an uncharacterized protein from Arabidopsis thaliana (Mouse-ear cress).